The chain runs to 354 residues: GTPase Obg (354 aa).

Positions 1–159 constitute an Obg domain; it reads MKYIDEAIIH…ADLKLELKVL (159 aa). Residues 160 to 334 form the OBG-type G domain; the sequence is ADVGLLGMPN…LTYAIMEFLE (175 aa). Residues 166–173, 191–195, 213–216, 284–287, and 315–317 contribute to the GTP site; these read GMPNAGKS, FTTMH, DIPG, NKVD, and SAM. 2 residues coordinate Mg(2+): S173 and T193.

Belongs to the TRAFAC class OBG-HflX-like GTPase superfamily. OBG GTPase family. Monomer. The cofactor is Mg(2+).

It localises to the cytoplasm. Functionally, an essential GTPase which binds GTP, GDP and possibly (p)ppGpp with moderate affinity, with high nucleotide exchange rates and a fairly low GTP hydrolysis rate. Plays a role in control of the cell cycle, stress response, ribosome biogenesis and in those bacteria that undergo differentiation, in morphogenesis control. The polypeptide is GTPase Obg (Nitrosospira multiformis (strain ATCC 25196 / NCIMB 11849 / C 71)).